Consider the following 416-residue polypeptide: E3 ubiquitin-protein ligase RNFT1 (416 aa).

Disordered regions lie at residues 1–50 (MKHR…MSLP) and 68–117 (DLSS…DSRE). Basic and acidic residues predominate over residues 7–19 (HERQSSTESKNLK). Composition is skewed to polar residues over residues 20-45 (ETTQLIMQSSSDHTHHQLGSNDSPSA) and 68-80 (DLSSQDSQHVARS). The segment covering 81–100 (NSRRVRPSTHGRSPSRHGHT) has biased composition (basic residues). A run of 6 helical transmembrane segments spans residues 146–166 (LVVQHITGISVGIGLLTTFLY), 184–204 (LQCLWVLVFLLFSSFLLYYTF), 214–234 (VFMNPSLGPLHFFDALWVVGI), 237–257 (FIGKFFFMGLKCIILLVPSFV), 265–287 (YWYMALEELAQCYCTLVSTPVWF), and 302–322 (WHFGILLALLYLILKILIIFG). The interval 349 to 400 (CSEADGMCAICQAEFTKPIALICQHVFCEECISSWFNKEKTCPLCRTLISNH) is required for ubiquitin ligase activity and for protection against ER stress-induced cell death. Residues 356–394 (CAICQAEFTKPIALICQHVFCEECISSWFNKEKTCPLCR) form an RING-type zinc finger.

It localises to the endoplasmic reticulum membrane. The enzyme catalyses S-ubiquitinyl-[E2 ubiquitin-conjugating enzyme]-L-cysteine + [acceptor protein]-L-lysine = [E2 ubiquitin-conjugating enzyme]-L-cysteine + N(6)-ubiquitinyl-[acceptor protein]-L-lysine.. It functions in the pathway protein modification; protein ubiquitination. Functionally, E3 ubiquitin-protein ligase that acts in the endoplasmic reticulum (ER)-associated degradation (ERAD) pathway, which targets misfolded proteins that accumulate in the endoplasmic reticulum (ER) for ubiquitination and subsequent proteasome-mediated degradation. Protects cells from ER stress-induced apoptosis. The chain is E3 ubiquitin-protein ligase RNFT1 (rnft1) from Xenopus laevis (African clawed frog).